A 313-amino-acid polypeptide reads, in one-letter code: MKDHQKIILVGDGAVGSSYAFACVNLSIGQEFGIIDIDKDRTIGDAMDLSHAVPFSTPKKIYSANYSDCHDADLVVVTAGTAQKPGETRLDLVNRNIKIMKGIVDEVMASGFDGIFLIASNPVDILTYATWKFSGLPKERVIGSGTSLDTARFRMSIADYLKVDARNVHGYILGEHGDTEFPAWSHTTVGGLPITEWISEDEQGAMDTIFVSVRDAAYEIINKKGATFYGVAAALARITKAILNNENAILPLSVYLDGHYGMNDIYIGAPAVVNRQGVRHIVEMNLNDKEKEQMKNSADTLKKVLDDAMKQID.

NAD(+) is bound by residues valine 15, aspartate 36, arginine 41, and tyrosine 66. Substrate contacts are provided by residues glutamine 83, arginine 89, and 121-124 (NPVD). Residues 119-121 (ASN) and serine 144 contribute to the NAD(+) site. 149–152 (DTAR) contacts substrate. Beta-D-fructose 1,6-bisphosphate contacts are provided by arginine 154 and histidine 169. Histidine 176 functions as the Proton acceptor in the catalytic mechanism. Tyrosine 218 is modified (phosphotyrosine). Residue threonine 227 participates in substrate binding.

The protein belongs to the LDH/MDH superfamily. LDH family. As to quaternary structure, homotetramer.

It is found in the cytoplasm. It catalyses the reaction (S)-lactate + NAD(+) = pyruvate + NADH + H(+). It participates in fermentation; pyruvate fermentation to lactate; (S)-lactate from pyruvate: step 1/1. Allosterically activated by fructose 1,6-bisphosphate (FBP). Catalyzes the conversion of lactate to pyruvate. The chain is L-lactate dehydrogenase 1 from Listeria monocytogenes serotype 4b (strain F2365).